A 345-amino-acid chain; its full sequence is Nicotinate-nucleotide--dimethylbenzimidazole phosphoribosyltransferase (345 aa).

Glu-312 acts as the Proton acceptor in catalysis.

The protein belongs to the CobT family.

It carries out the reaction 5,6-dimethylbenzimidazole + nicotinate beta-D-ribonucleotide = alpha-ribazole 5'-phosphate + nicotinate + H(+). Its pathway is nucleoside biosynthesis; alpha-ribazole biosynthesis; alpha-ribazole from 5,6-dimethylbenzimidazole: step 1/2. Catalyzes the synthesis of alpha-ribazole-5'-phosphate from nicotinate mononucleotide (NAMN) and 5,6-dimethylbenzimidazole (DMB). The protein is Nicotinate-nucleotide--dimethylbenzimidazole phosphoribosyltransferase of Bacteroides fragilis (strain ATCC 25285 / DSM 2151 / CCUG 4856 / JCM 11019 / LMG 10263 / NCTC 9343 / Onslow / VPI 2553 / EN-2).